We begin with the raw amino-acid sequence, 199 residues long: Protein GrpE (199 aa).

Residues 1–24 (MSKQNKKDWKKFKDEHKEEHKVEN) show a composition bias toward basic and acidic residues. The segment at 1–52 (MSKQNKKDWKKFKDEHKEEHKVENEILEEETDEESQHQEPALGHPSYTALEE) is disordered.

It belongs to the GrpE family. As to quaternary structure, homodimer.

The protein localises to the cytoplasm. Participates actively in the response to hyperosmotic and heat shock by preventing the aggregation of stress-denatured proteins, in association with DnaK and GrpE. It is the nucleotide exchange factor for DnaK and may function as a thermosensor. Unfolded proteins bind initially to DnaJ; upon interaction with the DnaJ-bound protein, DnaK hydrolyzes its bound ATP, resulting in the formation of a stable complex. GrpE releases ADP from DnaK; ATP binding to DnaK triggers the release of the substrate protein, thus completing the reaction cycle. Several rounds of ATP-dependent interactions between DnaJ, DnaK and GrpE are required for fully efficient folding. This Legionella pneumophila protein is Protein GrpE.